The chain runs to 428 residues: Type II methyltransferase M.TthHB8I (428 aa).

The tract at residues 407-428 is disordered; sequence RKGNTERRKHGPYTSPESAGSF.

The protein belongs to the N(4)/N(6)-methyltransferase family.

The enzyme catalyses a 2'-deoxyadenosine in DNA + S-adenosyl-L-methionine = an N(6)-methyl-2'-deoxyadenosine in DNA + S-adenosyl-L-homocysteine + H(+). In terms of biological role, a gamma subtype methylase, recognizes the double-stranded sequence 5'-TCGA-3', methylates A-4 on both strands and protects the DNA from cleavage by the TthHB8I endonuclease. This Thermus thermophilus (strain ATCC 27634 / DSM 579 / HB8) protein is Type II methyltransferase M.TthHB8I.